A 304-amino-acid chain; its full sequence is MARAEGDSWDVASSVGATAAMVAAGRAVATRDPRGLIDDPYAAPLVRAVGIEFFTKVADGEFDMTELDPSSAAEMQARIDEMALRTRFFDDYFLASTAGGIRQVVILASGLDSRAYRLPWPDGTVVYEIDQPAVIDFKTSTLAGIGAEPTAERRTVAIDLREDWPAALRAAGFDSAAPTAWCAEGLLIYLPPEAQDLLFDNVTALSATGSTVATEYVPGILNFDAEKARAASAQMRERGLDLDMPSLVYHGERKHVMEYLTSLGWTMAGLPRTDLFAKHGVPMVAHDNDPLGEIVYVSGTYQNR.

S-adenosyl-L-methionine-binding positions include Asp130 and 159-160 (DL).

It belongs to the UPF0677 family.

Exhibits S-adenosyl-L-methionine-dependent methyltransferase activity. This Mycobacterium sp. (strain JLS) protein is Putative S-adenosyl-L-methionine-dependent methyltransferase Mjls_1071.